The chain runs to 362 residues: Inactive 2'-5' oligoadenylate synthetase 1C (362 aa).

It belongs to the 2-5A synthase family. As to expression, expressed at highest level in brain with lesser amounts in spleen, kidney, stomach, liver, intestine, ovary, skin and testis. Not detected in lung, thymus, heart and uterus.

Its function is as follows. Does not have 2'-5'-OAS activity, but can bind double-stranded RNA. This Mus musculus (Mouse) protein is Inactive 2'-5' oligoadenylate synthetase 1C.